The sequence spans 302 residues: MQEERLTHLRQLEAESIYIIREVAAEFGNPVMLYSIGKDSSVMLHLARKAFFPGTLPFPLLHVDTGWKFREMYEFRDRTAKEYDFNLLVYKNPEGEALGINPFIHGSAKHTDIMKTEGLKQALDKYGFDAAFGGARRDEEKSRAKERIYSFRDKFHRWDPKNQRPELWHNYNGQINKGESIRVFPLSNWTELDIWQYIYLENIDIVPLYLAAKRPVIERDGMLMMVDDDRIDLKEGEKVEERMVRFRTLGCWPLTGAVESQAQTLPEIIEEMLVSTTSERQGRVIDRDQSGSMELKKRQGYF.

This sequence belongs to the PAPS reductase family. CysD subfamily. In terms of assembly, heterodimer composed of CysD, the smaller subunit, and CysN.

It carries out the reaction sulfate + ATP + H(+) = adenosine 5'-phosphosulfate + diphosphate. Its pathway is sulfur metabolism; hydrogen sulfide biosynthesis; sulfite from sulfate: step 1/3. Functionally, with CysN forms the ATP sulfurylase (ATPS) that catalyzes the adenylation of sulfate producing adenosine 5'-phosphosulfate (APS) and diphosphate, the first enzymatic step in sulfur assimilation pathway. APS synthesis involves the formation of a high-energy phosphoric-sulfuric acid anhydride bond driven by GTP hydrolysis by CysN coupled to ATP hydrolysis by CysD. The polypeptide is Sulfate adenylyltransferase subunit 2 (Zymomonas mobilis subsp. mobilis (strain ATCC 31821 / ZM4 / CP4)).